The primary structure comprises 104 residues: Nucleoid-associated protein Moth_0028 (104 aa).

The protein belongs to the YbaB/EbfC family. Homodimer.

It is found in the cytoplasm. It localises to the nucleoid. Functionally, binds to DNA and alters its conformation. May be involved in regulation of gene expression, nucleoid organization and DNA protection. The sequence is that of Nucleoid-associated protein Moth_0028 from Moorella thermoacetica (strain ATCC 39073 / JCM 9320).